A 961-amino-acid polypeptide reads, in one-letter code: Vitamin B12-dependent ribonucleotide reductase (961 aa).

Residues 1–23 (MTETTSGPARGSRTKGTKATKGL) are disordered. Substrate-binding positions include S143, 159–160 (AC), G188, 364–368 (NPCSE), and 554–558 (PTGTI). An intrachain disulfide couples C160 to C377. N364 serves as the catalytic Proton acceptor. C366 acts as the Cysteine radical intermediate in catalysis. E368 acts as the Proton acceptor in catalysis.

It belongs to the ribonucleoside diphosphate reductase class-2 family. Homotetramer. Adenosylcob(III)alamin serves as cofactor.

It carries out the reaction a 2'-deoxyribonucleoside 5'-diphosphate + [thioredoxin]-disulfide + H2O = a ribonucleoside 5'-diphosphate + [thioredoxin]-dithiol. In terms of biological role, catalyzes the reduction of ribonucleotides to deoxyribonucleotides. May function to provide a pool of deoxyribonucleotide precursors for DNA repair during oxygen limitation and/or for immediate growth after restoration of oxygen. The chain is Vitamin B12-dependent ribonucleotide reductase (nrdJ) from Streptomyces clavuligerus.